Here is a 93-residue protein sequence, read N- to C-terminus: Small ribosomal subunit protein uS19 (93 aa).

Belongs to the universal ribosomal protein uS19 family.

Its function is as follows. Protein S19 forms a complex with S13 that binds strongly to the 16S ribosomal RNA. The sequence is that of Small ribosomal subunit protein uS19 from Karelsulcia muelleri (strain GWSS) (Sulcia muelleri).